Here is a 260-residue protein sequence, read N- to C-terminus: Peptidase inhibitor 15-A (260 aa).

Residues 1-21 form the signal peptide; the sequence is MNENRLAIDILLLCISCGASA. The propeptide occupies 22–62; that stretch reads LAGFSPTASSSLPATNLTDIGFAPPKYLTEAANIPKTRRKR. Asn-37 and Asn-126 each carry an N-linked (GlcNAc...) asparagine glycan. In terms of domain architecture, SCP spans 73–213; sequence LDYHNKVRGK…KRATYLVCNY (141 aa).

Belongs to the CRISP family.

The protein localises to the secreted. Functionally, serine protease inhibitor which displays weak inhibitory activity against trypsin. May play a role in facial patterning during embryonic development. In Danio rerio (Zebrafish), this protein is Peptidase inhibitor 15-A (pi15a).